We begin with the raw amino-acid sequence, 361 residues long: 3-dehydroquinate synthase (361 aa).

The protein belongs to the archaeal-type DHQ synthase family.

The catalysed reaction is 2-amino-2,3,7-trideoxy-D-lyxo-hept-6-ulosonate + NAD(+) + H2O = 3-dehydroquinate + NH4(+) + NADH + H(+). In terms of biological role, catalyzes the oxidative deamination and cyclization of 2-amino-3,7-dideoxy-D-threo-hept-6-ulosonic acid (ADH) to yield 3-dehydroquinate (DHQ), which is fed into the canonical shikimic pathway of aromatic amino acid biosynthesis. This Methanococcus vannielii (strain ATCC 35089 / DSM 1224 / JCM 13029 / OCM 148 / SB) protein is 3-dehydroquinate synthase.